The primary structure comprises 394 residues: Tetracycline resistance protein, class D (394 aa).

12 helical membrane-spanning segments follow: residues 6-26, 42-62, 73-93, 94-114, 135-155, 159-179, 198-218, 243-263, 274-294, 296-316, 335-355, and 364-384; these read VIALVITLLDAMGIGLIMPVL, HYGILLALYAVMQVCFAPLLG, VLLLSLAGAAFDYTLLALSNV, LWMLYLGRIISGITGATGAVA, GAAFGAGLIAGPAIGGLAGDI, LPFVIAAILNACTFLMVFFIF, GISFITLLKPLALLLFVFFTA, AVGFSLAGLGAMHALFQAVVA, TIIFAGFIADATAFLLMSAIT, GWMVYPVLILLAGGGIALPAL, VLVSLTNLTGVAGPLLFAFIF, and GTVWLIGTALYGLLLAICLLI.

It belongs to the major facilitator superfamily. TCR/Tet family.

Its subcellular location is the cell inner membrane. In terms of biological role, resistance to tetracycline by an active tetracycline efflux. This is an energy-dependent process that decreases the accumulation of the antibiotic in whole cells. This protein functions as a metal-tetracycline/H(+) antiporter. This is Tetracycline resistance protein, class D (tetA) from Salmonella ordonez.